A 379-amino-acid chain; its full sequence is Cyclic dinucleotide synthase CdnE (379 aa).

UTP is bound by residues Q107, S109, D123, and K179. D123 is a Mg(2+) binding site. Position 193 (D193) interacts with Mg(2+). UTP-binding residues include N229, K257, and S274. Positions 328–330 match the Pyrimidine specificity motif (R/Q)xW in donor pocket motif; that stretch reads KIF.

Belongs to the CD-NTase family. E02 subfamily. Requires Mg(2+) as cofactor.

The catalysed reaction is 2 UTP = c-di-UMP + 2 diphosphate. It catalyses the reaction UTP + ATP = 3',3'-cUAMP + 2 diphosphate. The enzyme catalyses UTP + CTP = cyclic CMP-UMP + 2 diphosphate. In terms of biological role, cyclic nucleotide synthase (second messenger synthase) of a CBASS antivirus system. CBASS (cyclic oligonucleotide-based antiphage signaling system) provides immunity against bacteriophage. The CD-NTase protein synthesizes cyclic nucleotides in response to infection; these serve as specific second messenger signals. The signals activate a diverse range of effectors, leading to bacterial cell death and thus abortive phage infection. The effector protein for this system is membrane protein Cap15. A type I-B(UU) CBASS system. Cyclic dinucleotide synthase that preferentially catalyzes the synthesis of 3',3'-cyclic UMP-UMP (c-di-UMP) and 3',3'-cyclic UMP-AMP, with minor amounts of 3',3'-cyclic UMP-CMP, which are second messengers for cell signal transduction. Functionally, protects E.coli against phage infection. When the CBASS operon (cap15-cdnE) is introduced in E.coli MG1655 it protects against phages T2, T4, T5, T6, SECPhi4, SECPhi6, SECPhi17, SECPhi18 and SECPhi27, but not against phage T7. The sequence is that of Cyclic dinucleotide synthase CdnE from Yersinia aleksiciae.